A 329-amino-acid chain; its full sequence is Diaminopimelate epimerase (329 aa).

2 residues coordinate substrate: Asn-14 and Asn-73. The Proton donor role is filled by Cys-82. Substrate-binding positions include 83-84, Asn-170, Asn-206, and 224-225; these read GN and ER. Residue Cys-233 is the Proton acceptor of the active site. Substrate is bound at residue 234–235; it reads GT.

The protein belongs to the diaminopimelate epimerase family. In terms of assembly, homodimer.

It is found in the cytoplasm. The enzyme catalyses (2S,6S)-2,6-diaminopimelate = meso-2,6-diaminopimelate. Its pathway is amino-acid biosynthesis; L-lysine biosynthesis via DAP pathway; DL-2,6-diaminopimelate from LL-2,6-diaminopimelate: step 1/1. Catalyzes the stereoinversion of LL-2,6-diaminopimelate (L,L-DAP) to meso-diaminopimelate (meso-DAP), a precursor of L-lysine and an essential component of the bacterial peptidoglycan. This Listeria monocytogenes serotype 4b (strain CLIP80459) protein is Diaminopimelate epimerase.